A 138-amino-acid chain; its full sequence is Large ribosomal subunit protein bL17 (138 aa).

This sequence belongs to the bacterial ribosomal protein bL17 family. As to quaternary structure, part of the 50S ribosomal subunit. Contacts protein L32.

This is Large ribosomal subunit protein bL17 from Dinoroseobacter shibae (strain DSM 16493 / NCIMB 14021 / DFL 12).